The chain runs to 215 residues: Large ribosomal subunit protein uL1 (215 aa).

It belongs to the universal ribosomal protein uL1 family. As to quaternary structure, part of the 50S ribosomal subunit.

Binds directly to 23S rRNA. Probably involved in E site tRNA release. In terms of biological role, protein L1 is also a translational repressor protein, it controls the translation of its operon by binding to its mRNA. This chain is Large ribosomal subunit protein uL1, found in Methanospirillum hungatei JF-1 (strain ATCC 27890 / DSM 864 / NBRC 100397 / JF-1).